Reading from the N-terminus, the 747-residue chain is Heterogeneous nuclear ribonucleoprotein U-like protein 2 (747 aa).

The SAP domain occupies 3–37; it reads VKRLKVTELRSELQRRGLDSRGLKVDLAQRLQEAL. 2 disordered regions span residues 40 to 242 and 627 to 666; these read EMLE…EEED and EEAR…GQRR. Residues 73-97 are compositionally biased toward acidic residues; that stretch reads GDEEEDEEEEEEDEEALLEDEDEEP. The span at 115–125 shows a compositional bias: low complexity; it reads EAAAMEAAAEP. The span at 137-147 shows a compositional bias: gly residues; the sequence is GSGGVNGGEEQ. Over residues 148 to 163 the composition is skewed to basic and acidic residues; the sequence is GLGKREEDEPEERSGD. Serine 161 is modified (phosphoserine). A Phosphothreonine modification is found at threonine 165. Residues serine 168, serine 185, serine 188, serine 226, and serine 228 each carry the phosphoserine modification. Residues 185 to 223 are compositionally biased toward basic and acidic residues; it reads SEKSKPAGSDGERRGVKRQRDEKDEHGRAYYEFREEAYH. The region spanning 226–419 is the B30.2/SPRY domain; the sequence is SKSPLPPEEE…VELNFGQKEE (194 aa). Residues 232–242 show a composition bias toward acidic residues; sequence PEEEAKDEEED. The segment covering 627-639 has biased composition (basic and acidic residues); that stretch reads EEARKLLPPSEKR. Residues 640-654 are compositionally biased toward basic residues; it reads TNRRNNRNKRNRQNR. 4 positions are modified to omega-N-methylarginine: arginine 656, arginine 684, arginine 738, and arginine 747.

Binds to MLF1 and retains it in the nucleus.

Its subcellular location is the nucleus. This Homo sapiens (Human) protein is Heterogeneous nuclear ribonucleoprotein U-like protein 2 (HNRNPUL2).